Reading from the N-terminus, the 537-residue chain is Probable quinate permease (537 aa).

Topologically, residues 1–22 (MSILSLVEDRPTPKEVYNWKIY) are cytoplasmic. Residues 23–43 (LLAAVASCTSCMIGYDSAFIG) traverse the membrane as a helical segment. Residues 44–74 (TTISLQSFKDEFDWDSMSAAHQDLVSSNIVS) lie on the Extracellular side of the membrane. The helical transmembrane segment at 75–95 (LYQAGAFFGAFFAYPIGHFWG) threads the bilayer. Residues 96–97 (RK) are Cytoplasmic-facing. The chain crosses the membrane as a helical span at residues 98 to 118 (WGLMVSALIFTLGAGIMLGTN). Residues 119–130 (GDRGFGLLYGGR) lie on the Extracellular side of the membrane. Residues 131 to 151 (VLAGLGVGAGSNITPIYISEL) traverse the membrane as a helical segment. Over 152 to 159 (SPPAIRGR) the chain is Cytoplasmic. Residues 160-180 (LVGVYELGWQIGGLVGFWICY) traverse the membrane as a helical segment. The Extracellular segment spans residues 181-193 (GVDETLPPSHKQW). A helical membrane pass occupies residues 194 to 214 (IIPFAVQLIPSGLLIIGALFL). Residues 215 to 285 (KESPRWLFLR…AWTNKKILYR (71 aa)) lie on the Cytoplasmic side of the membrane. The helical transmembrane segment at 286–306 (LFLGSMLFFWQNGSGINAINY) threads the bilayer. Residues 307-325 (YSPTVFKSIGVTGSNTSLF) lie on the Extracellular side of the membrane. Residues 326–346 (TTGIFGVVKTVVTFIWLLWLI) form a helical membrane-spanning segment. At 347 to 352 (DRVGRR) the chain is on the cytoplasmic side. A helical membrane pass occupies residues 353–373 (LLLLIGAAGGSICLWIVGAYI). Topologically, residues 374-387 (KIARPSERENKQMD) are extracellular. Residues 388–408 (GGGIAAMFFFYLWTVFYTPSW) traverse the membrane as a helical segment. Over 409 to 456 (NGTPWVINSEMFDPNIRSLAQACAAGSNWLWNFLISRFTPQMFAKMDY) the chain is Cytoplasmic. A helical transmembrane segment spans residues 457–477 (GVYFFFASLMILSIIFVFFLI). Residues 478 to 537 (PETKGIPLESMDRLFETQPIWRAHGTLLKQIREDEERFRHDLEDSGFVKSTDRQVEVVDA) lie on the Extracellular side of the membrane.

The protein belongs to the major facilitator superfamily. Sugar transporter (TC 2.A.1.1) family. In terms of assembly, interacts with creB. Post-translationally, ubiquitinated. Deubiquitinated by creB, probably to control its activity or amount.

The protein localises to the cell membrane. Its function is as follows. Integral membrane transporter that imports quinic acid to be catabolized as a carbon source. The polypeptide is Probable quinate permease (qutD) (Aspergillus flavus (strain ATCC 200026 / FGSC A1120 / IAM 13836 / NRRL 3357 / JCM 12722 / SRRC 167)).